The primary structure comprises 104 residues: MTAPTTMTFFERFETDILSGKKTITIRDESERNYQPGSVVEVSTLEQGRVFCNLKIISVEPILFYDLGEFHAQQENMTLDVLKDVIQDIYPGISQLYVVSYELV.

One can recognise an ASCH domain in the interval 7–95 (MTFFERFETD…IQDIYPGISQ (89 aa)). Lys-22 functions as the Proton acceptor in the catalytic mechanism. Thr-25 functions as the Nucleophile in the catalytic mechanism. Glu-75 acts as the Proton donor in catalysis.

This sequence belongs to the N(4)-acetylcytidine amidohydrolase family.

The catalysed reaction is N(4)-acetylcytidine + H2O = cytidine + acetate + H(+). It carries out the reaction N(4)-acetyl-2'-deoxycytidine + H2O = 2'-deoxycytidine + acetate + H(+). The enzyme catalyses N(4)-acetylcytosine + H2O = cytosine + acetate + H(+). Functionally, catalyzes the hydrolysis of N(4)-acetylcytidine (ac4C). In Vibrio atlanticus (strain LGP32) (Vibrio splendidus (strain Mel32)), this protein is N(4)-acetylcytidine amidohydrolase.